The chain runs to 480 residues: Beta-amyrin 28-monooxygenase (480 aa).

A helical transmembrane segment spans residues Val-3–Leu-23. Cys-427 is a binding site for heme.

It belongs to the cytochrome P450 family. The cofactor is heme. Expressed in leaves, stems and fruit skin.

It is found in the membrane. It carries out the reaction beta-amyrin + 3 reduced [NADPH--hemoprotein reductase] + 3 O2 = oleanolate + 3 oxidized [NADPH--hemoprotein reductase] + 4 H2O + 4 H(+). Its function is as follows. Catalyzes the carboxylation of beta-amyrin at the C-28 position to form oleanolic acid. May be involved in saponin biosynthesis in fruit skin. This chain is Beta-amyrin 28-monooxygenase, found in Vitis vinifera (Grape).